The sequence spans 294 residues: ATP synthase gamma chain (294 aa).

It belongs to the ATPase gamma chain family. As to quaternary structure, F-type ATPases have 2 components, CF(1) - the catalytic core - and CF(0) - the membrane proton channel. CF(1) has five subunits: alpha(3), beta(3), gamma(1), delta(1), epsilon(1). CF(0) has three main subunits: a, b and c.

The protein localises to the cell inner membrane. Functionally, produces ATP from ADP in the presence of a proton gradient across the membrane. The gamma chain is believed to be important in regulating ATPase activity and the flow of protons through the CF(0) complex. The polypeptide is ATP synthase gamma chain (Rhizobium etli (strain CIAT 652)).